Consider the following 106-residue polypeptide: ATP-dependent Clp protease adapter protein ClpS (106 aa).

Belongs to the ClpS family. As to quaternary structure, binds to the N-terminal domain of the chaperone ClpA.

Its function is as follows. Involved in the modulation of the specificity of the ClpAP-mediated ATP-dependent protein degradation. The protein is ATP-dependent Clp protease adapter protein ClpS of Escherichia fergusonii (strain ATCC 35469 / DSM 13698 / CCUG 18766 / IAM 14443 / JCM 21226 / LMG 7866 / NBRC 102419 / NCTC 12128 / CDC 0568-73).